The following is a 100-amino-acid chain: SAGA-associated factor 11 (100 aa).

Residues 73–94 form an SGF11-type zinc finger; that stretch reads FQCENCGRSIAGGRFAQHMTKC.

Belongs to the SGF11 family. In terms of assembly, component of the 1.8 MDa SAGA transcription coactivator-HAT complex. SAGA is built of 5 distinct domains with specialized functions. Within the SAGA complex, SUS1, SGF11, SGF73 and UBP8 form an additional subcomplex of SAGA called the DUB module (deubiquitination module). Interacts directly with SGF73, SUS1 and UBP8.

It localises to the nucleus. In terms of biological role, functions as a component of the transcription regulatory histone acetylation (HAT) complex SAGA. At the promoters, SAGA is required for recruitment of the basal transcription machinery. It influences RNA polymerase II transcriptional activity through different activities such as TBP interaction and promoter selectivity, interaction with transcription activators, and chromatin modification through histone acetylation and deubiquitination. SAGA acetylates nucleosomal histone H3 to some extent (to form H3K9ac, H3K14ac, H3K18ac and H3K23ac). SAGA interacts with DNA via upstream activating sequences (UASs). Involved in transcriptional regulation of a subset of SAGA-regulated genes. Within the SAGA complex, participates in a subcomplex, that specifically deubiquitinates histones H2B. The polypeptide is SAGA-associated factor 11 (Debaryomyces hansenii (strain ATCC 36239 / CBS 767 / BCRC 21394 / JCM 1990 / NBRC 0083 / IGC 2968) (Yeast)).